The sequence spans 170 residues: MQNTIRIIGIDPGLRRTGWGVIDTLGNSLRFVASGTVTSDGDMDLASRLCQLHDGLADIVHGYKPDEAAVEQTFVNKDAVATLKLGQARGIAMLVPARAGLPVAEYAPNAVKKAVIGVGHGEKQQIHMMLKILMPKAEFKGNDAADALAIAICHAHNRGANRLRQAALAG.

Residues Asp-11, Glu-71, and Asp-143 contribute to the active site. Residues Asp-11, Glu-71, and Asp-143 each coordinate Mg(2+).

It belongs to the RuvC family. In terms of assembly, homodimer which binds Holliday junction (HJ) DNA. The HJ becomes 2-fold symmetrical on binding to RuvC with unstacked arms; it has a different conformation from HJ DNA in complex with RuvA. In the full resolvosome a probable DNA-RuvA(4)-RuvB(12)-RuvC(2) complex forms which resolves the HJ. Mg(2+) serves as cofactor.

It localises to the cytoplasm. It carries out the reaction Endonucleolytic cleavage at a junction such as a reciprocal single-stranded crossover between two homologous DNA duplexes (Holliday junction).. In terms of biological role, the RuvA-RuvB-RuvC complex processes Holliday junction (HJ) DNA during genetic recombination and DNA repair. Endonuclease that resolves HJ intermediates. Cleaves cruciform DNA by making single-stranded nicks across the HJ at symmetrical positions within the homologous arms, yielding a 5'-phosphate and a 3'-hydroxyl group; requires a central core of homology in the junction. The consensus cleavage sequence is 5'-(A/T)TT(C/G)-3'. Cleavage occurs on the 3'-side of the TT dinucleotide at the point of strand exchange. HJ branch migration catalyzed by RuvA-RuvB allows RuvC to scan DNA until it finds its consensus sequence, where it cleaves and resolves the cruciform DNA. This is Crossover junction endodeoxyribonuclease RuvC from Rhizobium rhizogenes (strain K84 / ATCC BAA-868) (Agrobacterium radiobacter).